The primary structure comprises 311 residues: Transmembrane protein DDB_G0273707/DDB_G0273361 (311 aa).

Positions 1-113 (MNEIEVDNLS…NNNNNKNENN (113 aa)) are disordered. Residue N8 is glycosylated (N-linked (GlcNAc...) asparagine). Residues 9–18 (LSHTNKNVAT) are compositionally biased toward polar residues. N-linked (GlcNAc...) asparagine glycans are attached at residues N35, N38, N62, and N76. Composition is skewed to low complexity over residues 37–67 (SNNS…SNSN) and 76–111 (NNSN…NKNE). Positions 95-124 (NNNNNNNNNNNNNNKNENNNKIKNEKINIL) form a coiled coil. The next 5 helical transmembrane spans lie at 150–170 (LEEI…LALL), 181–201 (IFLL…PKSP), 208–228 (LVLG…ALVY), 235–255 (VACA…KSIH), and 276–296 (FYYI…TALI).

The protein resides in the membrane. This is Transmembrane protein DDB_G0273707/DDB_G0273361 from Dictyostelium discoideum (Social amoeba).